A 376-amino-acid chain; its full sequence is MSSLVRLKFNAIKLVIDFGISENIAYLISIFLPIVLLLVISVLGVLVTVWLERKISAAVQQRIGPEYAGSLGIMQAIVDGVKLLIKEDIIPAQGDRWLFSIGPVLVVTPVILSYLVVPFGKNIILSDIRLGIFFWIVISSITPLGLLIAGYASNNKYSLLGGLRAAAQSISYEIPLTLCVLSISLLSNTLSTSDIVEQQCKYGILSWNIWRQPVGFITFFIASLAECERLPFDLPEAEEELVAGYQTEYSGIKFGIFYVASYLNLLVSSLFAVVLYLGGWNFPIPTTLIFFISMYKVSLPLDSSNLLLELIIPIIHISITLAKTYLFIFFAILARWTLPRIRIDQLLDLGWKFLLPMAVGNLLLTASFQLTLFEFS.

The next 9 membrane-spanning stretches (helical) occupy residues 27 to 47 (LISIFLPIVLLLVISVLGVLV), 65 to 85 (PEYAGSLGIMQAIVDGVKLLI), 97 to 117 (WLFSIGPVLVVTPVILSYLVV), 130 to 150 (LGIFFWIVISSITPLGLLIAG), 166 to 186 (AAQSISYEIPLTLCVLSISLL), 251 to 271 (GIKFGIFYVASYLNLLVSSLF), 272 to 292 (AVVLYLGGWNFPIPTTLIFFI), 310 to 330 (LIIPIIHISITLAKTYLFIFF), and 353 to 373 (FLLPMAVGNLLLTASFQLTLF).

Belongs to the complex I subunit 1 family. NDH is composed of at least 16 different subunits, 5 of which are encoded in the nucleus.

It localises to the plastid. The protein resides in the chloroplast thylakoid membrane. The catalysed reaction is a plastoquinone + NADH + (n+1) H(+)(in) = a plastoquinol + NAD(+) + n H(+)(out). It catalyses the reaction a plastoquinone + NADPH + (n+1) H(+)(in) = a plastoquinol + NADP(+) + n H(+)(out). Functionally, NDH shuttles electrons from NAD(P)H:plastoquinone, via FMN and iron-sulfur (Fe-S) centers, to quinones in the photosynthetic chain and possibly in a chloroplast respiratory chain. The immediate electron acceptor for the enzyme in this species is believed to be plastoquinone. Couples the redox reaction to proton translocation, and thus conserves the redox energy in a proton gradient. This Chara vulgaris (Common stonewort) protein is NAD(P)H-quinone oxidoreductase subunit 1, chloroplastic.